A 172-amino-acid chain; its full sequence is Ribosome maturation factor RimM (172 aa).

Residues 96–170 form the PRC barrel domain; that stretch reads EENEFYFHEI…KITIEVMEGL (75 aa).

This sequence belongs to the RimM family. Binds ribosomal protein uS19.

The protein resides in the cytoplasm. Its function is as follows. An accessory protein needed during the final step in the assembly of 30S ribosomal subunit, possibly for assembly of the head region. Essential for efficient processing of 16S rRNA. May be needed both before and after RbfA during the maturation of 16S rRNA. It has affinity for free ribosomal 30S subunits but not for 70S ribosomes. The polypeptide is Ribosome maturation factor RimM (Listeria monocytogenes serotype 4b (strain CLIP80459)).